Here is a 425-residue protein sequence, read N- to C-terminus: uncharacterized protein (425 aa).

The 57-residue stretch at 1 to 57 (MKDKPLKLTVEKLVYGGYGFSRLNGKAVFVRFASPKELVEAKVVKEKKDYTEAVVTK) folds into the TRAM domain. [4Fe-4S] cluster contacts are provided by Cys70, Cys76, Cys79, and Cys153. Residues Gln260, Asp308, and Asp354 each contribute to the S-adenosyl-L-methionine site. Cys381 serves as the catalytic Nucleophile.

Belongs to the class I-like SAM-binding methyltransferase superfamily. RNA M5U methyltransferase family.

This is an uncharacterized protein from Aquifex aeolicus (strain VF5).